A 993-amino-acid chain; its full sequence is Isoleucine--tRNA ligase, mitochondrial (993 aa).

The N-terminal 29 residues, 1–29 (SLWGTPRLPCSPGWQGATKRLLVRSVSGA), are a transit peptide targeting the mitochondrion. At lysine 55 the chain carries N6-acetyllysine; alternate. The residue at position 55 (lysine 55) is an N6-succinyllysine; alternate. The 'HIGH' region motif lies at 97-107 (PYANGDPHVGH). Lysine 170 bears the N6-acetyllysine mark. Lysine 175 carries the N6-succinyllysine modification. An N6-acetyllysine modification is found at lysine 214. Lysine 222 is modified (N6-acetyllysine; alternate). Lysine 222 carries the post-translational modification N6-succinyllysine; alternate. Lysine 460 and lysine 481 each carry N6-succinyllysine. Residues lysine 645 and lysine 648 each coordinate ATP. The 'KMSKS' region signature appears at 645 to 649 (KMSKS). Lysine 706 bears the N6-acetyllysine mark. Lysine 756 and lysine 762 each carry N6-acetyllysine; alternate. N6-succinyllysine; alternate is present on residues lysine 756 and lysine 762.

It belongs to the class-I aminoacyl-tRNA synthetase family.

The protein localises to the mitochondrion matrix. It carries out the reaction tRNA(Ile) + L-isoleucine + ATP = L-isoleucyl-tRNA(Ile) + AMP + diphosphate. In terms of biological role, aminoacyl-tRNA synthetase that catalyzes the specific attachment of isoleucine to its cognate tRNA (tRNA(Ile)). The sequence is that of Isoleucine--tRNA ligase, mitochondrial (IARS2) from Macaca fascicularis (Crab-eating macaque).